The following is a 178-amino-acid chain: Large ribosomal subunit protein eL20y (178 aa).

Belongs to the eukaryotic ribosomal protein eL20 family.

This chain is Large ribosomal subunit protein eL20y (RPL18AB), found in Arabidopsis thaliana (Mouse-ear cress).